The primary structure comprises 399 residues: PCI domain-containing protein 2 (399 aa).

The PCI domain occupies 210 to 391; sequence VTFKYYVGRK…QKLVVSKQNP (182 aa).

The protein belongs to the CSN12 family.

The polypeptide is PCI domain-containing protein 2 (pcid2) (Xenopus laevis (African clawed frog)).